The following is a 329-amino-acid chain: Basic leucine zipper 61 (329 aa).

Disordered stretches follow at residues Met1–Gln22 and Asp98–Lys204. Over residues Thr10–Gln22 the composition is skewed to polar residues. Low complexity predominate over residues Pro119–Asn133. The span at Asp139–Asp154 shows a compositional bias: basic and acidic residues. A compositionally biased stretch (low complexity) spans Asn155–Asn169. One can recognise a bZIP domain in the interval Asp202 to Gln254. Residues Lys204–Lys223 form a basic motif region. A leucine-zipper region spans residues Leu230 to Leu251. A compositionally biased stretch (polar residues) spans Lys304–Ser313. Residues Lys304–Val329 are disordered. The span at Pro319–Val329 shows a compositional bias: basic and acidic residues.

Forms heterodimers with BZIP18, BZIP43 and VIP1/BZIP51.

Its subcellular location is the nucleus. In terms of biological role, transcriptional activator. This Arabidopsis thaliana (Mouse-ear cress) protein is Basic leucine zipper 61.